The sequence spans 192 residues: E3 ubiquitin-protein ligase RNF185 (192 aa).

The segment covering 1-14 has biased composition (polar residues); the sequence is MASKGPSASASTEN. The tract at residues 1–30 is disordered; it reads MASKGPSASASTENSSAGGPSGSSNGTGES. Residues 1–130 lie on the Cytoplasmic side of the membrane; the sequence is MASKGPSASA…GGFQGFGFGD (130 aa). Low complexity predominate over residues 15-27; sequence SSAGGPSGSSNGT. Residues 29–80 are required for ubiquitin ligase activity and protection against ER stress-induced cell death; the sequence is ESGGQDSTFECNICLDTAKDAVISLCGHLFCWPCLHQWLETRPNRQVCPVCK. The RING-type zinc finger occupies 39-80; it reads CNICLDTAKDAVISLCGHLFCWPCLHQWLETRPNRQVCPVCK. The disordered stretch occupies residues 90-123; the sequence is PLYGRGSTGQQDPREKTPPRPQGQRPEPENRGGF. A helical transmembrane segment spans residues 131-151; it reads GGFQMSFGIGAFPFGIFATAF. The Mitochondrial intermembrane segment spans residues 152–171; that stretch reads NINDGRPPPAVPGTPQYVDE. Residues 172–192 traverse the membrane as a helical segment; that stretch reads QFLSRLFLFVALVIMFWLLIA.

In terms of assembly, interacts with ATG5 and BNIP1.

It localises to the mitochondrion outer membrane. The protein resides in the endoplasmic reticulum membrane. It catalyses the reaction S-ubiquitinyl-[E2 ubiquitin-conjugating enzyme]-L-cysteine + [acceptor protein]-L-lysine = [E2 ubiquitin-conjugating enzyme]-L-cysteine + N(6)-ubiquitinyl-[acceptor protein]-L-lysine.. It participates in protein modification; protein ubiquitination. Its function is as follows. E3 ubiquitin-protein ligase that regulates selective mitochondrial autophagy by mediating 'Lys-63'-linked polyubiquitination of BNIP1. Acts in the endoplasmic reticulum (ER)-associated degradation (ERAD) pathway, which targets misfolded proteins that accumulate in the endoplasmic reticulum (ER) for ubiquitination and subsequent proteasome-mediated degradation. Protects cells from ER stress-induced apoptosis. Responsible for the cotranslational ubiquitination and degradation of CFTR in the ERAD pathway. Also acts as a regulator of the innate antiviral response by catalyzing 'Lys-27'-linked polyubiquitination of CGAS, thereby promoting CGAS cyclic GMP-AMP synthase activity. Preferentially associates with the E2 enzymes UBE2J1 and UBE2J2. The chain is E3 ubiquitin-protein ligase RNF185 (Rnf185) from Rattus norvegicus (Rat).